The primary structure comprises 271 residues: Phosphatidylglycerol--prolipoprotein diacylglyceryl transferase (271 aa).

7 helical membrane-spanning segments follow: residues 21–41 (LAVR…MWLA), 60–80 (LLFA…VIFY), 95–115 (VWTG…AMFW), 124–144 (FFGV…MGRI), 177–197 (QLYE…WFIG), 203–223 (GSVS…VEYV), and 236–256 (FISM…LMMV). Arg143 contacts a 1,2-diacyl-sn-glycero-3-phospho-(1'-sn-glycerol).

The protein belongs to the Lgt family.

The protein resides in the cell inner membrane. The catalysed reaction is L-cysteinyl-[prolipoprotein] + a 1,2-diacyl-sn-glycero-3-phospho-(1'-sn-glycerol) = an S-1,2-diacyl-sn-glyceryl-L-cysteinyl-[prolipoprotein] + sn-glycerol 1-phosphate + H(+). The protein operates within protein modification; lipoprotein biosynthesis (diacylglyceryl transfer). Its function is as follows. Catalyzes the transfer of the diacylglyceryl group from phosphatidylglycerol to the sulfhydryl group of the N-terminal cysteine of a prolipoprotein, the first step in the formation of mature lipoproteins. The polypeptide is Phosphatidylglycerol--prolipoprotein diacylglyceryl transferase (Vibrio cholerae serotype O1 (strain ATCC 39541 / Classical Ogawa 395 / O395)).